Consider the following 371-residue polypeptide: Putative glutamate--cysteine ligase 2 (371 aa).

It belongs to the glutamate--cysteine ligase type 2 family. YbdK subfamily. Homodimer.

The catalysed reaction is L-cysteine + L-glutamate + ATP = gamma-L-glutamyl-L-cysteine + ADP + phosphate + H(+). ATP-dependent carboxylate-amine ligase which exhibits weak glutamate--cysteine ligase activity. The protein is Putative glutamate--cysteine ligase 2 of Klebsiella pneumoniae (strain 342).